The primary structure comprises 382 residues: Fetuin-B (382 aa).

An N-terminal signal peptide occupies residues 1–15; it reads MGLLLPLALCILVLC. 2 consecutive Cystatin fetuin-B-type domains span residues 25 to 138 and 149 to 255; these read ALNP…YNCT and MTCP…VTCD. An N-linked (GlcNAc...) asparagine glycan is attached at N37. Intrachain disulfides connect C93-C104, C117-C137, and C151-C154. N-linked (GlcNAc...) asparagine glycosylation is present at N136. N-linked (GlcNAc...) asparagine glycosylation occurs at N182. 2 disulfides stabilise this stretch: C216/C224 and C237/C254. 2 stretches are compositionally biased toward polar residues: residues 262-276 and 286-295; these read PATG…QKPT and QKNTPPTDSP. Disordered stretches follow at residues 262–320 and 363–382; these read PATG…EKGP and ARTA…VLPP. O-linked (GalNAc...) threonine glycosylation is found at T289 and T292. Basic and acidic residues predominate over residues 310 to 320; sequence LDDKNSQEKGP. S315 is modified (phosphoserine).

It belongs to the fetuin family. Liver and testis.

Its subcellular location is the secreted. In terms of biological role, protease inhibitor required for egg fertilization. Required to prevent premature zona pellucida hardening before fertilization, probably by inhibiting the protease activity of ASTL, a protease that mediates the cleavage of ZP2 and triggers zona pellucida hardening. The polypeptide is Fetuin-B (FETUB) (Homo sapiens (Human)).